The following is an 86-amino-acid chain: Large ribosomal subunit protein bL27 (86 aa).

A disordered region spans residues 1 to 22; the sequence is MATKKAGGSSRNGRDSAGRRLG.

This sequence belongs to the bacterial ribosomal protein bL27 family.

The sequence is that of Large ribosomal subunit protein bL27 from Rickettsia bellii (strain RML369-C).